The primary structure comprises 143 residues: Putative transmembrane protein ORF32 (143 aa).

A run of 2 helical transmembrane segments spans residues 20–42 and 52–74; these read GISG…SFTL and WPLI…EGGV.

It localises to the host membrane. This Haloarcula hispanica (His1V) protein is Putative transmembrane protein ORF32.